Here is a 159-residue protein sequence, read N- to C-terminus: Putative ribosomal RNA large subunit methyltransferase H (159 aa).

Residues Leu-76, Gly-108, and 127-132 each bind S-adenosyl-L-methionine; that span reads FSKMTF.

Belongs to the RNA methyltransferase RlmH family.

The protein localises to the cytoplasm. The catalysed reaction is pseudouridine(1915) in 23S rRNA + S-adenosyl-L-methionine = N(3)-methylpseudouridine(1915) in 23S rRNA + S-adenosyl-L-homocysteine + H(+). Its function is as follows. Specifically methylates the pseudouridine at position 1915 (m3Psi1915) in 23S rRNA. The protein is Putative ribosomal RNA large subunit methyltransferase H of Methanococcus maripaludis (strain C7 / ATCC BAA-1331).